Consider the following 156-residue polypeptide: Small ribosomal subunit protein uS7 (156 aa).

This sequence belongs to the universal ribosomal protein uS7 family. In terms of assembly, part of the 30S ribosomal subunit. Contacts proteins S9 and S11.

In terms of biological role, one of the primary rRNA binding proteins, it binds directly to 16S rRNA where it nucleates assembly of the head domain of the 30S subunit. Is located at the subunit interface close to the decoding center, probably blocks exit of the E-site tRNA. The sequence is that of Small ribosomal subunit protein uS7 from Alkaliphilus metalliredigens (strain QYMF).